A 152-amino-acid polypeptide reads, in one-letter code: MIDQNHDSEEQAQMQKLTRTVTLTVALTLVSGCSYFGVYKRDLAQGNLVTSAMAEQLQPGMTRQQVVNLMGSPMLEAPFDAQQWDYVYRLDKAYGGVEQRRLTLTFQGNRLADIDRHGDFSRPPSVADERGIGPTDSTNARGNLLNARPDDE.

A signal peptide spans 1 to 32; that stretch reads MIDQNHDSEEQAQMQKLTRTVTLTVALTLVSG. Residue C33 is the site of N-palmitoyl cysteine attachment. C33 is lipidated: S-diacylglycerol cysteine. Positions 114–152 are disordered; that stretch reads IDRHGDFSRPPSVADERGIGPTDSTNARGNLLNARPDDE.

The protein belongs to the BamE family. Part of the Bam complex.

It is found in the cell outer membrane. Functionally, part of the outer membrane protein assembly complex, which is involved in assembly and insertion of beta-barrel proteins into the outer membrane. The protein is Outer membrane protein assembly factor BamE of Halomonas elongata (strain ATCC 33173 / DSM 2581 / NBRC 15536 / NCIMB 2198 / 1H9).